Reading from the N-terminus, the 127-residue chain is Fluoride-specific ion channel FluC (127 aa).

Transmembrane regions (helical) follow at residues 4–24, 36–56, 68–88, and 99–119; these read SILA…FLGL, GTLL…AYFA, LIIT…AEVV, and AAGA…LGLF. Na(+) is bound by residues Gly75 and Thr78.

Belongs to the fluoride channel Fluc/FEX (TC 1.A.43) family.

It localises to the cell inner membrane. The enzyme catalyses fluoride(in) = fluoride(out). Its activity is regulated as follows. Na(+) is not transported, but it plays an essential structural role and its presence is essential for fluoride channel function. Functionally, fluoride-specific ion channel. Important for reducing fluoride concentration in the cell, thus reducing its toxicity. The chain is Fluoride-specific ion channel FluC from Pseudomonas paraeruginosa (strain DSM 24068 / PA7) (Pseudomonas aeruginosa (strain PA7)).